The following is a 333-amino-acid chain: Biotin synthase (333 aa).

In terms of domain architecture, Radical SAM core spans 47–276; it reads YYGKKVKLNM…TKEIRISGGR (230 aa). The [4Fe-4S] cluster site is built by Cys-65, Cys-69, and Cys-72. [2Fe-2S] cluster-binding residues include Cys-109, Cys-141, Cys-201, and Arg-271.

This sequence belongs to the radical SAM superfamily. Biotin synthase family. Homodimer. Requires [4Fe-4S] cluster as cofactor. [2Fe-2S] cluster serves as cofactor.

It catalyses the reaction (4R,5S)-dethiobiotin + (sulfur carrier)-SH + 2 reduced [2Fe-2S]-[ferredoxin] + 2 S-adenosyl-L-methionine = (sulfur carrier)-H + biotin + 2 5'-deoxyadenosine + 2 L-methionine + 2 oxidized [2Fe-2S]-[ferredoxin]. It participates in cofactor biosynthesis; biotin biosynthesis; biotin from 7,8-diaminononanoate: step 2/2. In terms of biological role, catalyzes the conversion of dethiobiotin (DTB) to biotin by the insertion of a sulfur atom into dethiobiotin via a radical-based mechanism. In Bacillus licheniformis (strain ATCC 14580 / DSM 13 / JCM 2505 / CCUG 7422 / NBRC 12200 / NCIMB 9375 / NCTC 10341 / NRRL NRS-1264 / Gibson 46), this protein is Biotin synthase.